A 216-amino-acid polypeptide reads, in one-letter code: Refilin-B (216 aa).

The interval 1–55 is disordered; sequence MVGRLSLQDVPELVDTKKKGDGVLDSPDSGLPPSPSPSHWGLAATAGGGGERAPV. S6 and S26 each carry phosphoserine.

This sequence belongs to the Refilin family. In terms of assembly, interacts with FLNA and FLNB. Detected in various tissues, with highest expression in lung, followed by spleen.

The protein resides in the cytoplasm. Its subcellular location is the cytoskeleton. Involved in the regulation of the perinuclear actin network and nuclear shape through interaction with filamins. Plays an essential role in the formation of cartilaginous skeletal elements. This is Refilin-B from Mus musculus (Mouse).